A 293-amino-acid polypeptide reads, in one-letter code: Pyridoxal 5'-phosphate synthase subunit PdxS (293 aa).

Aspartate 23 provides a ligand contact to D-ribose 5-phosphate. Lysine 80 functions as the Schiff-base intermediate with D-ribose 5-phosphate in the catalytic mechanism. Glycine 152 contributes to the D-ribose 5-phosphate binding site. D-glyceraldehyde 3-phosphate is bound at residue arginine 164. Residues glycine 213 and glycine 234 to serine 235 each bind D-ribose 5-phosphate.

Belongs to the PdxS/SNZ family. In terms of assembly, in the presence of PdxT, forms a dodecamer of heterodimers.

It catalyses the reaction aldehydo-D-ribose 5-phosphate + D-glyceraldehyde 3-phosphate + L-glutamine = pyridoxal 5'-phosphate + L-glutamate + phosphate + 3 H2O + H(+). It functions in the pathway cofactor biosynthesis; pyridoxal 5'-phosphate biosynthesis. In terms of biological role, catalyzes the formation of pyridoxal 5'-phosphate from ribose 5-phosphate (RBP), glyceraldehyde 3-phosphate (G3P) and ammonia. The ammonia is provided by the PdxT subunit. Can also use ribulose 5-phosphate and dihydroxyacetone phosphate as substrates, resulting from enzyme-catalyzed isomerization of RBP and G3P, respectively. The sequence is that of Pyridoxal 5'-phosphate synthase subunit PdxS from Roseiflexus castenholzii (strain DSM 13941 / HLO8).